Here is a 269-residue protein sequence, read N- to C-terminus: Ubiquinone/menaquinone biosynthesis C-methyltransferase UbiE (269 aa).

S-adenosyl-L-methionine contacts are provided by residues threonine 92, aspartate 113, and asparagine 141–alanine 142.

The protein belongs to the class I-like SAM-binding methyltransferase superfamily. MenG/UbiE family.

The enzyme catalyses a 2-demethylmenaquinol + S-adenosyl-L-methionine = a menaquinol + S-adenosyl-L-homocysteine + H(+). The catalysed reaction is a 2-methoxy-6-(all-trans-polyprenyl)benzene-1,4-diol + S-adenosyl-L-methionine = a 5-methoxy-2-methyl-3-(all-trans-polyprenyl)benzene-1,4-diol + S-adenosyl-L-homocysteine + H(+). Its pathway is quinol/quinone metabolism; menaquinone biosynthesis; menaquinol from 1,4-dihydroxy-2-naphthoate: step 2/2. The protein operates within cofactor biosynthesis; ubiquinone biosynthesis. Its function is as follows. Methyltransferase required for the conversion of demethylmenaquinol (DMKH2) to menaquinol (MKH2) and the conversion of 2-polyprenyl-6-methoxy-1,4-benzoquinol (DDMQH2) to 2-polyprenyl-3-methyl-6-methoxy-1,4-benzoquinol (DMQH2). This is Ubiquinone/menaquinone biosynthesis C-methyltransferase UbiE from Brucella suis biovar 1 (strain 1330).